The sequence spans 260 residues: Ribosomal RNA small subunit methyltransferase J (260 aa).

Residues 125-126 and Asp179 contribute to the S-adenosyl-L-methionine site; that span reads ER. Positions 234-260 are disordered; the sequence is IDGPKPSHALDGKSSRYDIYPKKALKP. Basic and acidic residues predominate over residues 241 to 254; the sequence is HALDGKSSRYDIYP.

This sequence belongs to the methyltransferase superfamily. RsmJ family.

Its subcellular location is the cytoplasm. It catalyses the reaction guanosine(1516) in 16S rRNA + S-adenosyl-L-methionine = N(2)-methylguanosine(1516) in 16S rRNA + S-adenosyl-L-homocysteine + H(+). Functionally, specifically methylates the guanosine in position 1516 of 16S rRNA. The sequence is that of Ribosomal RNA small subunit methyltransferase J from Pseudomonas fluorescens (strain SBW25).